Consider the following 1005-residue polypeptide: DNA double-strand break repair Rad50 ATPase (1005 aa).

ATP-binding positions include Lys-14, 35 to 40 (GSGKSS), 62 to 64 (ITK), and Gln-134. Coiled coils occupy residues 189-230 (KENY…IEKL), 292-321 (LVDEIRKIESRLRELKSHYEDYLKLTKQLE), 346-379 (LDTLLNKIKDEIERVETIKDLLEELKNLNEEIEK), and 404-498 (AVEY…LKEV). The 98-residue stretch at 457 to 554 (IEEKKKVLEN…DIEKLKKEID (98 aa)) folds into the Zinc-hook domain. Residues Cys-502 and Cys-505 each coordinate Zn(2+). Coiled coils occupy residues 523-600 (TQLN…YVIN), 656-692 (KEKCREELNKLREDEREINRLKDKLNELKNKEKELIE), and 800-834 (RQELDNVREQKTEIETGIEYLKKDVESLKARLKEM).

The protein belongs to the SMC family. RAD50 subfamily. In terms of assembly, homodimer. Forms a heterotetramer composed of two Mre11 subunits and two Rad50 subunits. Zn(2+) is required as a cofactor.

Functionally, part of the Rad50/Mre11 complex, which is involved in the early steps of DNA double-strand break (DSB) repair. The complex may facilitate opening of the processed DNA ends to aid in the recruitment of HerA and NurA. Rad50 controls the balance between DNA end bridging and DNA resection via ATP-dependent structural rearrangements of the Rad50/Mre11 complex. This chain is DNA double-strand break repair Rad50 ATPase, found in Methanocaldococcus jannaschii (strain ATCC 43067 / DSM 2661 / JAL-1 / JCM 10045 / NBRC 100440) (Methanococcus jannaschii).